A 375-amino-acid polypeptide reads, in one-letter code: uncharacterized protein (375 aa).

It belongs to the IMPDH/GMPR family.

This is an uncharacterized protein from Mycobacterium leprae (strain TN).